The sequence spans 120 residues: Small ribosomal subunit protein uS13 (120 aa).

Positions 97-120 (PVRGQRTKTNARTRKGKKKTVGAK) are disordered.

Belongs to the universal ribosomal protein uS13 family. As to quaternary structure, part of the 30S ribosomal subunit. Forms a loose heterodimer with protein S19. Forms two bridges to the 50S subunit in the 70S ribosome.

Its function is as follows. Located at the top of the head of the 30S subunit, it contacts several helices of the 16S rRNA. In the 70S ribosome it contacts the 23S rRNA (bridge B1a) and protein L5 of the 50S subunit (bridge B1b), connecting the 2 subunits; these bridges are implicated in subunit movement. Contacts the tRNAs in the A and P-sites. The protein is Small ribosomal subunit protein uS13 of Nitratiruptor sp. (strain SB155-2).